We begin with the raw amino-acid sequence, 166 residues long: Alanine racemase (166 aa).

Catalysis depends on Tyr62, which acts as the Proton acceptor; specific for L-alanine. A substrate-binding site is contributed by Met110.

It belongs to the alanine racemase family. Pyridoxal 5'-phosphate is required as a cofactor.

The catalysed reaction is L-alanine = D-alanine. It participates in amino-acid biosynthesis; D-alanine biosynthesis; D-alanine from L-alanine: step 1/1. In terms of biological role, catalyzes the interconversion of L-alanine and D-alanine. May also act on other amino acids. The protein is Alanine racemase (alr) of Piscirickettsia salmonis.